The following is a 72-amino-acid chain: Translation initiation factor IF-1 (72 aa).

The S1-like domain occupies 1-72 (MAREDLIEVE…SRGRITYRKK (72 aa)).

This sequence belongs to the IF-1 family. As to quaternary structure, component of the 30S ribosomal translation pre-initiation complex which assembles on the 30S ribosome in the order IF-2 and IF-3, IF-1 and N-formylmethionyl-tRNA(fMet); mRNA recruitment can occur at any time during PIC assembly.

It localises to the cytoplasm. One of the essential components for the initiation of protein synthesis. Stabilizes the binding of IF-2 and IF-3 on the 30S subunit to which N-formylmethionyl-tRNA(fMet) subsequently binds. Helps modulate mRNA selection, yielding the 30S pre-initiation complex (PIC). Upon addition of the 50S ribosomal subunit IF-1, IF-2 and IF-3 are released leaving the mature 70S translation initiation complex. The chain is Translation initiation factor IF-1 from Acholeplasma laidlawii (strain PG-8A).